Here is a 348-residue protein sequence, read N- to C-terminus: Uroporphyrinogen decarboxylase (348 aa).

Substrate-binding positions include 27 to 31, Phe-46, Asp-76, Tyr-152, Ser-207, and His-320; that span reads RQAGR.

The protein belongs to the uroporphyrinogen decarboxylase family. In terms of assembly, homodimer.

Its subcellular location is the cytoplasm. It carries out the reaction uroporphyrinogen III + 4 H(+) = coproporphyrinogen III + 4 CO2. Its pathway is porphyrin-containing compound metabolism; protoporphyrin-IX biosynthesis; coproporphyrinogen-III from 5-aminolevulinate: step 4/4. Catalyzes the decarboxylation of four acetate groups of uroporphyrinogen-III to yield coproporphyrinogen-III. The sequence is that of Uroporphyrinogen decarboxylase from Bacillus cereus (strain G9842).